We begin with the raw amino-acid sequence, 193 residues long: Ribose 1,5-bisphosphate phosphokinase PhnN (193 aa).

9 to 16 (GPSGAGKD) lines the ATP pocket.

It belongs to the ribose 1,5-bisphosphokinase family.

The catalysed reaction is alpha-D-ribose 1,5-bisphosphate + ATP = 5-phospho-alpha-D-ribose 1-diphosphate + ADP. Its pathway is metabolic intermediate biosynthesis; 5-phospho-alpha-D-ribose 1-diphosphate biosynthesis; 5-phospho-alpha-D-ribose 1-diphosphate from D-ribose 5-phosphate (route II): step 3/3. Catalyzes the phosphorylation of ribose 1,5-bisphosphate to 5-phospho-D-ribosyl alpha-1-diphosphate (PRPP). The sequence is that of Ribose 1,5-bisphosphate phosphokinase PhnN from Yersinia pestis.